A 203-amino-acid chain; its full sequence is MKKMAIACALLSSVVASSVWADAASSLKSRLDKVSSFHATFTQKVTDGSGAAVQEGQGDLWVKRPNLFNWHMTQPDESILVSDGKTLWFYNPFVEQATATWLKDATGNTPFMLIARNQASDWQQYNIKQDGDNFVLTPKASNGNLKQFTINVGRDGTIHQFSAVEQDDQRSAYQLKSQQNGAVEPSKFTFTPPQGVTIDDQRK.

The signal sequence occupies residues 1–21 (MKKMAIACALLSSVVASSVWA). The interval 178–203 (QQNGAVEPSKFTFTPPQGVTIDDQRK) is disordered.

It belongs to the LolA family. In terms of assembly, monomer.

It localises to the periplasm. In terms of biological role, participates in the translocation of lipoproteins from the inner membrane to the outer membrane. Only forms a complex with a lipoprotein if the residue after the N-terminal Cys is not an aspartate (The Asp acts as a targeting signal to indicate that the lipoprotein should stay in the inner membrane). The protein is Outer-membrane lipoprotein carrier protein of Salmonella typhi.